Consider the following 261-residue polypeptide: Small ribosomal subunit protein eS1 (261 aa).

Over residues 1–18 the composition is skewed to basic residues; sequence MAVGKNKRISKGKKGGKK. Positions 1-21 are disordered; it reads MAVGKNKRISKGKKGGKKKAT.

The protein belongs to the eukaryotic ribosomal protein eS1 family. As to quaternary structure, component of the small ribosomal subunit. Mature ribosomes consist of a small (40S) and a large (60S) subunit. The 40S subunit contains about 33 different proteins and 1 molecule of RNA (18S). The 60S subunit contains about 49 different proteins and 3 molecules of RNA (25S, 5.8S and 5S).

The protein resides in the cytoplasm. This chain is Small ribosomal subunit protein eS1 (cyc07), found in Daucus carota (Wild carrot).